Consider the following 220-residue polypeptide: MKTGALATFLALCLPVTVFATTLRLSNEVDLLVLDGKKVSSSLLRGAESIELENGPHQLVFRVEKTIRLPGNEERLYISPPLVISFDTQLISQVNFQLPRLENEREASHFNAAPRLALLDGDAMPIPVKLDILAITSTAKVVDYEIETERYNKSAKRASLPQFATMMADDSTLLSDVSELDTVPPQSQTLTEQRLKYCFRLADPQTRHHFLQWAEKQPPS.

A signal peptide spans 1-20 (MKTGALATFLALCLPVTVFA).

This sequence belongs to the UPF0319 family.

The chain is UPF0319 protein YccT from Salmonella paratyphi A (strain ATCC 9150 / SARB42).